Here is a 598-residue protein sequence, read N- to C-terminus: Aspartate--tRNA(Asp/Asn) ligase (598 aa).

E174 serves as a coordination point for L-aspartate. The interval 198 to 201 (QQLK) is aspartate. R220 is an L-aspartate binding site. Residues 220–222 (RDE) and Q229 contribute to the ATP site. Residue H458 coordinates L-aspartate. E492 serves as a coordination point for ATP. R499 contributes to the L-aspartate binding site. 544–547 (GIDR) is an ATP binding site.

The protein belongs to the class-II aminoacyl-tRNA synthetase family. Type 1 subfamily. Homodimer.

The protein resides in the cytoplasm. The catalysed reaction is tRNA(Asx) + L-aspartate + ATP = L-aspartyl-tRNA(Asx) + AMP + diphosphate. Functionally, aspartyl-tRNA synthetase with relaxed tRNA specificity since it is able to aspartylate not only its cognate tRNA(Asp) but also tRNA(Asn). Reaction proceeds in two steps: L-aspartate is first activated by ATP to form Asp-AMP and then transferred to the acceptor end of tRNA(Asp/Asn). The protein is Aspartate--tRNA(Asp/Asn) ligase of Dehalococcoides mccartyi (strain ATCC BAA-2266 / KCTC 15142 / 195) (Dehalococcoides ethenogenes (strain 195)).